A 1520-amino-acid polypeptide reads, in one-letter code: DNA-directed RNA polymerase subunit beta'' (1520 aa).

Residues Cys-220, Cys-296, Cys-303, and Cys-306 each coordinate Zn(2+). 2 stretches are compositionally biased toward basic and acidic residues: residues 645–654 (TREEEYRTRE) and 664–674 (PENKYRTREGE). Disordered regions lie at residues 645 to 676 (TREE…GEGE) and 705 to 786 (YRTL…KKEG). 2 stretches are compositionally biased toward acidic residues: residues 730–748 (GEYE…SSED) and 756–779 (TLEE…PEED).

Belongs to the RNA polymerase beta' chain family. RpoC2 subfamily. In terms of assembly, in plastids the minimal PEP RNA polymerase catalytic core is composed of four subunits: alpha, beta, beta', and beta''. When a (nuclear-encoded) sigma factor is associated with the core the holoenzyme is formed, which can initiate transcription. The cofactor is Zn(2+).

The protein resides in the plastid. The protein localises to the chloroplast. The catalysed reaction is RNA(n) + a ribonucleoside 5'-triphosphate = RNA(n+1) + diphosphate. Its function is as follows. DNA-dependent RNA polymerase catalyzes the transcription of DNA into RNA using the four ribonucleoside triphosphates as substrates. The sequence is that of DNA-directed RNA polymerase subunit beta'' from Sorghum bicolor (Sorghum).